The primary structure comprises 148 residues: Large ribosomal subunit protein bL9 (148 aa).

The protein belongs to the bacterial ribosomal protein bL9 family.

Its function is as follows. Binds to the 23S rRNA. The chain is Large ribosomal subunit protein bL9 from Desulfatibacillum aliphaticivorans.